A 73-amino-acid chain; its full sequence is Translation initiation factor IF-1 (73 aa).

Residues 1–73 (MANKEELIEF…SKGRITYRAR (73 aa)) form the S1-like domain.

Belongs to the IF-1 family. As to quaternary structure, component of the 30S ribosomal translation pre-initiation complex which assembles on the 30S ribosome in the order IF-2 and IF-3, IF-1 and N-formylmethionyl-tRNA(fMet); mRNA recruitment can occur at any time during PIC assembly.

The protein resides in the cytoplasm. Functionally, one of the essential components for the initiation of protein synthesis. Stabilizes the binding of IF-2 and IF-3 on the 30S subunit to which N-formylmethionyl-tRNA(fMet) subsequently binds. Helps modulate mRNA selection, yielding the 30S pre-initiation complex (PIC). Upon addition of the 50S ribosomal subunit IF-1, IF-2 and IF-3 are released leaving the mature 70S translation initiation complex. The chain is Translation initiation factor IF-1 from Acinetobacter baylyi (strain ATCC 33305 / BD413 / ADP1).